The primary structure comprises 390 residues: GTPase Obg (390 aa).

Positions 1-159 (MKFVDEAAIL…RELMLELLLL (159 aa)) constitute an Obg domain. The OBG-type G domain occupies 160–333 (ADVGMLGLPN…LCWDVMSFLN (174 aa)). Residues 166–173 (GLPNAGKS), 191–195 (FTTLI), 213–216 (DIPG), 283–286 (NKID), and 314–316 (SAA) each bind GTP. Mg(2+)-binding residues include serine 173 and threonine 193. The segment covering 364-384 (VEAEAEDDWDDDWDEEDDDGV) has biased composition (acidic residues). The disordered stretch occupies residues 364-390 (VEAEAEDDWDDDWDEEDDDGVEIIYER).

The protein belongs to the TRAFAC class OBG-HflX-like GTPase superfamily. OBG GTPase family. In terms of assembly, monomer. Mg(2+) serves as cofactor.

The protein resides in the cytoplasm. An essential GTPase which binds GTP, GDP and possibly (p)ppGpp with moderate affinity, with high nucleotide exchange rates and a fairly low GTP hydrolysis rate. Plays a role in control of the cell cycle, stress response, ribosome biogenesis and in those bacteria that undergo differentiation, in morphogenesis control. This Yersinia pestis protein is GTPase Obg.